Consider the following 60-residue polypeptide: Protein translocase subunit SecE (60 aa).

Over 1-31 (MFARLIRYFQEARAELARVTWPTREQVVEGT) the chain is Cytoplasmic. The chain crosses the membrane as a helical span at residues 32–52 (QAILLFTLAFMVILGLYDTVF). At 53–60 (RFLIGLLR) the chain is on the extracellular side.

The protein belongs to the SecE/SEC61-gamma family. Component of the Sec protein translocase complex. Heterotrimer consisting of SecY, SecE and SecG subunits. The heterotrimers can form oligomers, although 1 heterotrimer is thought to be able to translocate proteins. Interacts with SecDF, and other proteins may be involved. The channel interacts with SecA via subunit SecY.

It is found in the cell inner membrane. Essential subunit of the protein translocation channel SecYEG. Clamps together the 2 halves of SecY. May contact the channel plug during translocation. This chain is Protein translocase subunit SecE, found in Thermus thermophilus (strain ATCC 27634 / DSM 579 / HB8).